The sequence spans 476 residues: Sulfate adenylyltransferase subunit 1 (476 aa).

One can recognise a tr-type G domain in the interval 24 to 241 (KSLLRFLTCG…EDVDFVQEQE (218 aa)). The segment at 33-40 (GSVDDGKS) is G1. 33–40 (GSVDDGKS) serves as a coordination point for GTP. The tract at residues 91–95 (GITID) is G2. Residues 112-115 (DTPG) are G3. GTP is bound by residues 112 to 116 (DTPGH) and 167 to 170 (NKMD). The tract at residues 167–170 (NKMD) is G4. Residues 205 to 207 (SAL) form a G5 region.

The protein belongs to the TRAFAC class translation factor GTPase superfamily. Classic translation factor GTPase family. CysN/NodQ subfamily. In terms of assembly, heterodimer composed of CysD, the smaller subunit, and CysN.

The catalysed reaction is sulfate + ATP + H(+) = adenosine 5'-phosphosulfate + diphosphate. It participates in sulfur metabolism; hydrogen sulfide biosynthesis; sulfite from sulfate: step 1/3. Functionally, with CysD forms the ATP sulfurylase (ATPS) that catalyzes the adenylation of sulfate producing adenosine 5'-phosphosulfate (APS) and diphosphate, the first enzymatic step in sulfur assimilation pathway. APS synthesis involves the formation of a high-energy phosphoric-sulfuric acid anhydride bond driven by GTP hydrolysis by CysN coupled to ATP hydrolysis by CysD. This Photobacterium profundum (strain SS9) protein is Sulfate adenylyltransferase subunit 1.